Here is a 292-residue protein sequence, read N- to C-terminus: Pyridoxal 5'-phosphate synthase subunit PdxS (292 aa).

D-ribose 5-phosphate is bound at residue aspartate 22. The Schiff-base intermediate with D-ribose 5-phosphate role is filled by lysine 79. Residue glycine 151 coordinates D-ribose 5-phosphate. Arginine 163 lines the D-glyceraldehyde 3-phosphate pocket. Residues glycine 212 and 233–234 (GS) each bind D-ribose 5-phosphate.

Belongs to the PdxS/SNZ family. In terms of assembly, in the presence of PdxT, forms a dodecamer of heterodimers.

The catalysed reaction is aldehydo-D-ribose 5-phosphate + D-glyceraldehyde 3-phosphate + L-glutamine = pyridoxal 5'-phosphate + L-glutamate + phosphate + 3 H2O + H(+). The protein operates within cofactor biosynthesis; pyridoxal 5'-phosphate biosynthesis. Its function is as follows. Catalyzes the formation of pyridoxal 5'-phosphate from ribose 5-phosphate (RBP), glyceraldehyde 3-phosphate (G3P) and ammonia. The ammonia is provided by the PdxT subunit. Can also use ribulose 5-phosphate and dihydroxyacetone phosphate as substrates, resulting from enzyme-catalyzed isomerization of RBP and G3P, respectively. In Caldanaerobacter subterraneus subsp. tengcongensis (strain DSM 15242 / JCM 11007 / NBRC 100824 / MB4) (Thermoanaerobacter tengcongensis), this protein is Pyridoxal 5'-phosphate synthase subunit PdxS.